The chain runs to 243 residues: 1-(5-phosphoribosyl)-5-[(5-phosphoribosylamino)methylideneamino] imidazole-4-carboxamide isomerase (243 aa).

Aspartate 8 functions as the Proton acceptor in the catalytic mechanism. The Proton donor role is filled by aspartate 130.

Belongs to the HisA/HisF family.

It localises to the cytoplasm. It carries out the reaction 1-(5-phospho-beta-D-ribosyl)-5-[(5-phospho-beta-D-ribosylamino)methylideneamino]imidazole-4-carboxamide = 5-[(5-phospho-1-deoxy-D-ribulos-1-ylimino)methylamino]-1-(5-phospho-beta-D-ribosyl)imidazole-4-carboxamide. The protein operates within amino-acid biosynthesis; L-histidine biosynthesis; L-histidine from 5-phospho-alpha-D-ribose 1-diphosphate: step 4/9. This is 1-(5-phosphoribosyl)-5-[(5-phosphoribosylamino)methylideneamino] imidazole-4-carboxamide isomerase from Saccharophagus degradans (strain 2-40 / ATCC 43961 / DSM 17024).